Reading from the N-terminus, the 294-residue chain is 4-hydroxy-tetrahydrodipicolinate synthase (294 aa).

Pyruvate is bound at residue Thr47. Tyr135 acts as the Proton donor/acceptor in catalysis. Residue Lys163 is the Schiff-base intermediate with substrate of the active site. Thr205 contacts pyruvate.

It belongs to the DapA family. As to quaternary structure, homotetramer; dimer of dimers.

The protein localises to the cytoplasm. It carries out the reaction L-aspartate 4-semialdehyde + pyruvate = (2S,4S)-4-hydroxy-2,3,4,5-tetrahydrodipicolinate + H2O + H(+). It functions in the pathway amino-acid biosynthesis; L-lysine biosynthesis via DAP pathway; (S)-tetrahydrodipicolinate from L-aspartate: step 3/4. In terms of biological role, catalyzes the condensation of (S)-aspartate-beta-semialdehyde [(S)-ASA] and pyruvate to 4-hydroxy-tetrahydrodipicolinate (HTPA). The chain is 4-hydroxy-tetrahydrodipicolinate synthase from Rickettsia conorii (strain ATCC VR-613 / Malish 7).